The chain runs to 152 residues: MVMMLRTWRLLPMVLLAAYCYCVFGTCSIGTTTAPVEWKSPDRQIPKNITCANYSGTINGNVTFRGLQNKTEDFLHWLLGWGHKSICSFFPKLQGNYNEQHYRYEVANLTYNCTYNRLTLLNLTTENSGKYYFKREDANFTFYYSCYNLTVS.

An N-terminal signal peptide occupies residues 1–25; it reads MVMMLRTWRLLPMVLLAAYCYCVFG. 9 N-linked (GlcNAc...) asparagine; by host glycosylation sites follow: Asn-48, Asn-53, Asn-61, Asn-69, Asn-108, Asn-112, Asn-122, Asn-139, and Asn-148.

The protein belongs to the RL11 family. Post-translationally, N-glycosylated and possibly O-glycosylated.

The protein localises to the virion membrane. The chain is Early glycoprotein GP48 (UL4) from Homo sapiens (Human).